The sequence spans 440 residues: tRNA(Ile)-lysidine synthase (440 aa).

28–33 is a binding site for ATP; that stretch reads SGGMDS.

This sequence belongs to the tRNA(Ile)-lysidine synthase family.

It localises to the cytoplasm. It carries out the reaction cytidine(34) in tRNA(Ile2) + L-lysine + ATP = lysidine(34) in tRNA(Ile2) + AMP + diphosphate + H(+). Its function is as follows. Ligates lysine onto the cytidine present at position 34 of the AUA codon-specific tRNA(Ile) that contains the anticodon CAU, in an ATP-dependent manner. Cytidine is converted to lysidine, thus changing the amino acid specificity of the tRNA from methionine to isoleucine. The sequence is that of tRNA(Ile)-lysidine synthase from Xanthomonas axonopodis pv. citri (strain 306).